The sequence spans 172 residues: Large ribosomal subunit protein uL10 (172 aa).

Belongs to the universal ribosomal protein uL10 family. Part of the ribosomal stalk of the 50S ribosomal subunit. The N-terminus interacts with L11 and the large rRNA to form the base of the stalk. The C-terminus forms an elongated spine to which L12 dimers bind in a sequential fashion forming a multimeric L10(L12)X complex.

In terms of biological role, forms part of the ribosomal stalk, playing a central role in the interaction of the ribosome with GTP-bound translation factors. The protein is Large ribosomal subunit protein uL10 of Chlamydia trachomatis serovar L2 (strain ATCC VR-902B / DSM 19102 / 434/Bu).